The sequence spans 233 residues: Homeobox protein not2 (233 aa).

The homeobox DNA-binding region spans 135–194 (LKRIRTVFTPEQLERLEKEFLKQQYMVGTERVDLASTLNLTETQVKVWFQNRRIKWRKQS). Positions 212-233 (SSDHTDDSRETEEEEDDVDVEL) are disordered. Acidic residues predominate over residues 220–233 (RETEEEEDDVDVEL).

In terms of tissue distribution, localized to the dorsal lip of the blastopore (Spemann organizer) during early gastrulation, after which expression continues in tissues derived from the organizer. Expressed in the notochord during mid-gastrulation, the chordoneural hinge, notochord and ventral spinal cord of the tailbud at stage 22, and finally the tip of the tail in the tadpole (stage 35).

It is found in the nucleus. Functionally, transcriptional repressor. Plays a fundamental role in notochord formation, acting within the mesodermal region. Acts downstream of gsc and upstream of chrd and foxa4-A/pintallavis. This is Homeobox protein not2 from Xenopus laevis (African clawed frog).